The following is a 332-amino-acid chain: T-cell surface glycoprotein CD1c2 (332 aa).

Positions 1-17 (MLFLQFLFVDVVLGGSI) are cleaved as a signal peptide. Residues 18–300 (TENVVQENIS…IILYWGHGLS (283 aa)) lie on the Extracellular side of the membrane. Asparagine 25, asparagine 38, and asparagine 75 each carry an N-linked (GlcNAc...) asparagine glycan. 2 disulfide bridges follow: cysteine 120–cysteine 184 and cysteine 224–cysteine 279. In terms of domain architecture, Ig-like spans 205 to 292 (PEVWLSSSPN…HSSLRDQDII (88 aa)). Residues 301–321 (VILIALAVIVPLVLLIVLVLL) form a helical membrane-spanning segment. Over 322–332 (CKKRCTYQGIP) the chain is Cytoplasmic.

Heterodimer with B2M (beta-2-microglobulin).

It localises to the cell membrane. The protein resides in the endosome membrane. Its function is as follows. Antigen-presenting protein that binds self and non-self lipid and glycolipid antigens and presents them to T-cell receptors on natural killer T-cells. This is T-cell surface glycoprotein CD1c2 (CD1C2) from Cavia porcellus (Guinea pig).